The following is a 204-amino-acid chain: Guanylate kinase (204 aa).

Residues 6 to 184 (GLLIVLSGPA…AVDRIKAIVT (179 aa)) form the Guanylate kinase-like domain. 13-20 (GPAGVGKG) contributes to the ATP binding site.

Belongs to the guanylate kinase family.

The protein resides in the cytoplasm. The catalysed reaction is GMP + ATP = GDP + ADP. Its function is as follows. Essential for recycling GMP and indirectly, cGMP. The sequence is that of Guanylate kinase (gmk) from Halalkalibacterium halodurans (strain ATCC BAA-125 / DSM 18197 / FERM 7344 / JCM 9153 / C-125) (Bacillus halodurans).